Reading from the N-terminus, the 402-residue chain is Tryptophan synthase beta chain (402 aa).

K91 bears the N6-(pyridoxal phosphate)lysine mark.

The protein belongs to the TrpB family. As to quaternary structure, tetramer of two alpha and two beta chains. It depends on pyridoxal 5'-phosphate as a cofactor.

It catalyses the reaction (1S,2R)-1-C-(indol-3-yl)glycerol 3-phosphate + L-serine = D-glyceraldehyde 3-phosphate + L-tryptophan + H2O. It functions in the pathway amino-acid biosynthesis; L-tryptophan biosynthesis; L-tryptophan from chorismate: step 5/5. The beta subunit is responsible for the synthesis of L-tryptophan from indole and L-serine. This Streptococcus thermophilus (strain ATCC BAA-250 / LMG 18311) protein is Tryptophan synthase beta chain.